Reading from the N-terminus, the 50-residue chain is Peroxiredoxin-6 (50 aa).

The region spanning Asp1 to Arg50 is the Thioredoxin domain. Residue Thr3 is modified to Phosphothreonine. The Cysteine sulfenic acid (-SOH) intermediate; for peroxidase activity role is filled by Cys6. N6-acetyllysine is present on Lys19. Asp28 acts as the For phospholipase activity in catalysis.

This sequence belongs to the peroxiredoxin family. Prx6 subfamily. As to quaternary structure, homodimer. Interacts with GSTP1; mediates PRDX6 glutathionylation and regeneration. Interacts with APEX1. Interacts with STH. May interact with FAM168B. May interact with HTR2A. Post-translationally, irreversibly inactivated by overoxidation of Cys-6 to sulfinic acid (Cys-SO(2)H) and sulfonic acid (Cys-SO(3)H) forms upon oxidative stress. Phosphorylation at Thr-177 by MAP kinases increases the phospholipase activity of the enzyme. The phosphorylated form exhibits a greater lysophosphatidylcholine acyltransferase activity compared to the non-phosphorylated form.

The protein localises to the cytoplasm. The protein resides in the lysosome. The enzyme catalyses a hydroperoxide + 2 glutathione = an alcohol + glutathione disulfide + H2O. It carries out the reaction a 1,2-diacyl-sn-glycero-3-phosphocholine + H2O = a 1-acyl-sn-glycero-3-phosphocholine + a fatty acid + H(+). The catalysed reaction is a 1-acyl-sn-glycero-3-phosphocholine + an acyl-CoA = a 1,2-diacyl-sn-glycero-3-phosphocholine + CoA. It catalyses the reaction 1-hexadecanoyl-sn-glycero-3-phosphocholine + hexadecanoyl-CoA = 1,2-dihexadecanoyl-sn-glycero-3-phosphocholine + CoA. The enzyme catalyses 1,2-dihexadecanoyl-sn-glycero-3-phosphocholine + H2O = 1-hexadecanoyl-sn-glycero-3-phosphocholine + hexadecanoate + H(+). Its function is as follows. Thiol-specific peroxidase that catalyzes the reduction of hydrogen peroxide and organic hydroperoxides to water and alcohols, respectively. Can reduce H(2)O(2) and short chain organic, fatty acid, and phospholipid hydroperoxides. Also has phospholipase activity, and can therefore either reduce the oxidized sn-2 fatty acyl group of phospholipids (peroxidase activity) or hydrolyze the sn-2 ester bond of phospholipids (phospholipase activity). These activities are dependent on binding to phospholipids at acidic pH and to oxidized phospholipds at cytosolic pH. Plays a role in cell protection against oxidative stress by detoxifying peroxides and in phospholipid homeostasis. Exhibits acyl-CoA-dependent lysophospholipid acyltransferase which mediates the conversion of lysophosphatidylcholine (1-acyl-sn-glycero-3-phosphocholine or LPC) into phosphatidylcholine (1,2-diacyl-sn-glycero-3-phosphocholine or PC). Shows a clear preference for LPC as the lysophospholipid and for palmitoyl CoA as the fatty acyl substrate. The chain is Peroxiredoxin-6 from Mesocricetus auratus (Golden hamster).